We begin with the raw amino-acid sequence, 197 residues long: EF-hand calcium-binding domain-containing protein 9 (197 aa).

Residues D58 and D69 each contribute to the Ca(2+) site. 3 consecutive EF-hand domains span residues 59–94, 100–135, and 136–171; these read LKKA…LLAH, GQFM…FLFN, and IQKQ…YTDK. Residues D149, D153, R155, and E160 each contribute to the Ca(2+) site. Positions 177–188 are enriched in basic and acidic residues; sequence KTEEKEKGERKR. A disordered region spans residues 177–197; it reads KTEEKEKGERKRSLYSKCHIK.

In terms of assembly, component of the CatSper complex or CatSpermasome composed of the core pore-forming members CATSPER1, CATSPER2, CATSPER3 and CATSPER4 as well as auxiliary members CATSPERB, CATSPERG, CATSPERD, CATSPERE, CATSPERZ, C2CD6/CATSPERT, TMEM249, TMEM262 and EFCAB9. HSPA1 may be an additional auxiliary complex member. The core complex members CATSPER1, CATSPER2, CATSPER3 and CATSPER4 form a heterotetrameric channel. The auxiliary CATSPERB, CATSPERG, CATSPERD and CATSPERE subunits form a pavilion-like structure over the pore which stabilizes the complex through interactions with CATSPER4, CATSPER3, CATSPER1 and CATSPER2 respectively. TMEM262/CATSPERH interacts with CATSPERB, further stabilizing the complex. C2CD6/CATSPERT interacts at least with CATSPERD and is required for targeting the CatSper complex in the flagellar membrane. Interacts with CATSPERZ; the interaction is direct, Ca(2+)-dependent and connects EFCAB9 with the CatSper complex. Dissociates from CATSPERZ at elevated pH.

The protein resides in the cytoplasm. It is found in the cell projection. The protein localises to the cilium. Its subcellular location is the flagellum. Functionally, auxiliary component of the CatSper complex, a complex involved in sperm cell hyperactivation. pH-dependent Ca(2+) sensor required to activate the CatSper channel. Sperm cell hyperactivation is needed for sperm motility which is essential late in the preparation of sperm for fertilization. Associates with the CatSper complex via direct interaction with CATSPERZ, and senses intracellular Ca(2+). Together with CATSPERZ, associates with the CatSper channel pore and is required for the two-row structure of each single CatSper channel. The sequence is that of EF-hand calcium-binding domain-containing protein 9 from Homo sapiens (Human).